Here is an 82-residue protein sequence, read N- to C-terminus: EMBRYO SURROUNDING FACTOR 1-like protein 10 (82 aa).

An N-terminal signal peptide occupies residues 1-22 (MSSLYFAILCLFMIFLVPLHEF). Disulfide bonds link cysteine 39–cysteine 55, cysteine 44–cysteine 74, cysteine 53–cysteine 70, and cysteine 56–cysteine 63.

Belongs to the MEG family. Expressed in stems, leaves and flowers.

The polypeptide is EMBRYO SURROUNDING FACTOR 1-like protein 10 (ESFL10) (Arabidopsis thaliana (Mouse-ear cress)).